A 220-amino-acid polypeptide reads, in one-letter code: uncharacterized protein (220 aa).

The interval 1–50 is disordered; it reads MTDDVRDVNTETTDATEVAEIDSAAGEAGDSATEAFDTDSATESTAQKGQ. Positions 39–48 are enriched in polar residues; sequence DSATESTAQK. A helical membrane pass occupies residues 65–85; sequence VPVILILLMLISGGATGWLYL.

It to M.tuberculosis Rv1363c.

It is found in the membrane. This is an uncharacterized protein from Mycobacterium tuberculosis (strain CDC 1551 / Oshkosh).